Consider the following 156-residue polypeptide: MNIIEGKLQLIGDERIAIISSRFNHLITDRLVEGAKDCFVRHGGRDDLLDLVLVPGAYEIPFALQKILSQGEYDGICCLGAVIRGSTPHFDYVSAEATKGIANVTLKYGAPVTFGVLTTDSIEQAIERAGTKVGNKGFEAMASLIELINLYRKIGA.

Residues phenylalanine 23, alanine 57–glutamate 59, and alanine 81–isoleucine 83 contribute to the 5-amino-6-(D-ribitylamino)uracil site. A (2S)-2-hydroxy-3-oxobutyl phosphate-binding site is contributed by serine 86–threonine 87. Histidine 89 (proton donor) is an active-site residue. Residue phenylalanine 114 participates in 5-amino-6-(D-ribitylamino)uracil binding. Arginine 128 contacts (2S)-2-hydroxy-3-oxobutyl phosphate.

It belongs to the DMRL synthase family.

It catalyses the reaction (2S)-2-hydroxy-3-oxobutyl phosphate + 5-amino-6-(D-ribitylamino)uracil = 6,7-dimethyl-8-(1-D-ribityl)lumazine + phosphate + 2 H2O + H(+). Its pathway is cofactor biosynthesis; riboflavin biosynthesis; riboflavin from 2-hydroxy-3-oxobutyl phosphate and 5-amino-6-(D-ribitylamino)uracil: step 1/2. Catalyzes the formation of 6,7-dimethyl-8-ribityllumazine by condensation of 5-amino-6-(D-ribitylamino)uracil with 3,4-dihydroxy-2-butanone 4-phosphate. This is the penultimate step in the biosynthesis of riboflavin. The sequence is that of 6,7-dimethyl-8-ribityllumazine synthase from Helicobacter hepaticus (strain ATCC 51449 / 3B1).